Consider the following 348-residue polypeptide: MSESRITYKDAGVDIDAGNTFVKMIKPLVKATSRPEVIADIGGFGGLFSLNSSKYKNPVLVSGTDGVGTKLKIAFLANRHDTIGIDLVAMCVNDIIVQGAEPLFFLDYLATAKLDPEKGASIIKGVSEGCIQAGCALIGGETAEMPGFYSGDEYDMAGFAVGVVDRDKIIDGSSITVGNRLIGIASSGLHSNGYSLARKIIFDKMGLGIDDIIPGLDKTVADELLTPTRIYVRSILNLLRDFPINGIAHITGGGLLENIPRILPNGCKALVHKNSWQPPPIYQILQNAGNIEENELFRTFNCGIGMVLAVPEKEADEVLIRLSGLNEHAFVIGEIAKCEAGSECVEMI.

The protein belongs to the AIR synthase family.

It is found in the cytoplasm. The enzyme catalyses 2-formamido-N(1)-(5-O-phospho-beta-D-ribosyl)acetamidine + ATP = 5-amino-1-(5-phospho-beta-D-ribosyl)imidazole + ADP + phosphate + H(+). Its pathway is purine metabolism; IMP biosynthesis via de novo pathway; 5-amino-1-(5-phospho-D-ribosyl)imidazole from N(2)-formyl-N(1)-(5-phospho-D-ribosyl)glycinamide: step 2/2. In Geotalea uraniireducens (strain Rf4) (Geobacter uraniireducens), this protein is Phosphoribosylformylglycinamidine cyclo-ligase.